The primary structure comprises 1024 residues: Beta-galactosidase (1024 aa).

Substrate is bound by residues asparagine 103 and aspartate 202. A Na(+)-binding site is contributed by aspartate 202. Mg(2+)-binding residues include glutamate 417, histidine 419, and glutamate 462. Substrate contacts are provided by residues glutamate 462 and 538 to 541; that span reads EYAH. Glutamate 462 acts as the Proton donor in catalysis. Glutamate 538 functions as the Nucleophile in the catalytic mechanism. Position 598 (asparagine 598) interacts with Mg(2+). Na(+) is bound by residues phenylalanine 602 and asparagine 605. The substrate site is built by asparagine 605 and tryptophan 1000.

Belongs to the glycosyl hydrolase 2 family. In terms of assembly, homotetramer. Mg(2+) serves as cofactor. It depends on Na(+) as a cofactor.

It catalyses the reaction Hydrolysis of terminal non-reducing beta-D-galactose residues in beta-D-galactosides.. This Escherichia coli O127:H6 (strain E2348/69 / EPEC) protein is Beta-galactosidase.